The primary structure comprises 291 residues: Nucleotide-binding protein CMM_1747 (291 aa).

15–22 serves as a coordination point for ATP; the sequence is GMSGAGRS. 66–69 lines the GTP pocket; that stretch reads DVRG.

It belongs to the RapZ-like family.

Functionally, displays ATPase and GTPase activities. In Clavibacter michiganensis subsp. michiganensis (strain NCPPB 382), this protein is Nucleotide-binding protein CMM_1747.